Consider the following 194-residue polypeptide: Insertion element IS136 uncharacterized 21.2 kDa protein (194 aa).

Residues 73-103 (SCDRACAPTPGRDPPVSSLPNSRQPARQNPR) form a disordered region. Residues 90 to 103 (SLPNSRQPARQNPR) are compositionally biased toward polar residues.

In Agrobacterium tumefaciens (strain T37), this protein is Insertion element IS136 uncharacterized 21.2 kDa protein.